The sequence spans 698 residues: Elongation factor G (698 aa).

The tr-type G domain occupies 10–285 (AGTRNIGIMA…AVVDFLPNPL (276 aa)). GTP-binding positions include 19 to 26 (AHIDAGKT), 83 to 87 (DTPGH), and 137 to 140 (NKMD).

Belongs to the TRAFAC class translation factor GTPase superfamily. Classic translation factor GTPase family. EF-G/EF-2 subfamily.

The protein localises to the cytoplasm. In terms of biological role, catalyzes the GTP-dependent ribosomal translocation step during translation elongation. During this step, the ribosome changes from the pre-translocational (PRE) to the post-translocational (POST) state as the newly formed A-site-bound peptidyl-tRNA and P-site-bound deacylated tRNA move to the P and E sites, respectively. Catalyzes the coordinated movement of the two tRNA molecules, the mRNA and conformational changes in the ribosome. This chain is Elongation factor G, found in Frankia casuarinae (strain DSM 45818 / CECT 9043 / HFP020203 / CcI3).